The sequence spans 360 residues: Protein Wnt-2 (360 aa).

Residues 1 to 25 form the signal peptide; the sequence is MNAPLGGIWPWLPLLLTWLTPEVSS. 11 disulfide bridges follow: Cys76–Cys87, Cys127–Cys135, Cys137–Cys157, Cys206–Cys220, Cys208–Cys215, Cys278–Cys309, Cys294–Cys304, Cys308–Cys348, Cys324–Cys339, Cys326–Cys336, and Cys331–Cys332. A lipid anchor (O-palmitoleoyl serine; by PORCN) is attached at Ser212. Asn295 carries an N-linked (GlcNAc...) asparagine glycan.

The protein belongs to the Wnt family. Palmitoleoylation is required for efficient binding to frizzled receptors. Depalmitoleoylation leads to Wnt signaling pathway inhibition.

It localises to the secreted. The protein resides in the extracellular space. It is found in the extracellular matrix. Functionally, ligand for members of the frizzled family of seven transmembrane receptors. Functions in the canonical Wnt signaling pathway that results in activation of transcription factors of the TCF/LEF family. Functions as a upstream regulator of FGF10 expression. Plays an important role in embryonic lung development. May contribute to embryonic brain development by regulating the proliferation of dopaminergic precursors and neurons. This chain is Protein Wnt-2 (WNT2), found in Felis catus (Cat).